Here is a 164-residue protein sequence, read N- to C-terminus: Phosphopantetheine adenylyltransferase (164 aa).

Serine 9 contributes to the substrate binding site. ATP-binding positions include 9–10 (SF) and histidine 17. Residues lysine 41, valine 78, and arginine 92 each coordinate substrate. ATP is bound by residues 93–95 (GLR), glutamate 103, and 128–134 (SRPITAT).

It belongs to the bacterial CoaD family. In terms of assembly, homohexamer. Requires Mg(2+) as cofactor.

The protein resides in the cytoplasm. It carries out the reaction (R)-4'-phosphopantetheine + ATP + H(+) = 3'-dephospho-CoA + diphosphate. The protein operates within cofactor biosynthesis; coenzyme A biosynthesis; CoA from (R)-pantothenate: step 4/5. Its function is as follows. Reversibly transfers an adenylyl group from ATP to 4'-phosphopantetheine, yielding dephospho-CoA (dPCoA) and pyrophosphate. The chain is Phosphopantetheine adenylyltransferase from Sinorhizobium fredii (strain NBRC 101917 / NGR234).